The primary structure comprises 129 residues: Transcriptional activator protein (129 aa).

Residues 1–20 (MRSSSPSQPPSIKRAHRQAK) form a disordered region. A Nuclear localization signal motif is present at residues 13 to 28 (KRAHRQAKKRAIRRRR). A zinc finger spans residues 33-50 (CGCSIYFHLGCAGHGFTH). The tract at residues 73-118 (LFQDTQSRGPTVYQNEGIPRTDTVQPQPEESVASPQSLPELPSLDD) is disordered. 2 stretches are compositionally biased toward polar residues: residues 74–86 (FQDT…TVYQ) and 94–109 (DTVQ…SPQS). S109 carries the phosphoserine; by host modification. The segment at 115–129 (SLDDVDDSFWINLFS) is transactivation.

This sequence belongs to the geminiviridae transcriptional activator protein family. Monomer. Homodimer. Homooligomer. Self-interaction correlates with nuclear localization and efficient activation of transcription. Monomers suppress local silencing by interacting with and inactivating host adenosine kinase 2 (ADK2) in the cytoplasm. Interacts with and inhibits host SNF1 kinase. Post-translationally, phosphorylated at Ser-109 by A.thaliana KIN10.

The protein resides in the host nucleus. It is found in the host cytoplasm. Its function is as follows. Strong activator of the late viral genes promoters. Enhances the expression of the capsid protein and nuclear shuttle protein. Acts as a suppressor of RNA-mediated gene silencing, also known as post-transcriptional gene silencing (PTGS), a mechanism of plant viral defense that limits the accumulation of viral RNAs. Suppresses the host RNA silencing by inhibiting adenosine kinase 2 (ADK2), a kinase involved in a general methylation pathway. Also suppresses the host basal defense by interacting with and inhibiting SNF1 kinase, a key regulator of cell metabolism implicated in innate antiviral defense. Determines pathogenicity. The protein is Transcriptional activator protein of Nicotiana tabacum (Common tobacco).